Reading from the N-terminus, the 165-residue chain is Protein SprT (165 aa).

The SprT-like domain maps to 20-163 (EKLAQANLKL…RCVHCGEQLV (144 aa)). His78 lines the Zn(2+) pocket. Glu79 is an active-site residue. His82 contributes to the Zn(2+) binding site.

Belongs to the SprT family. It depends on Zn(2+) as a cofactor.

The protein resides in the cytoplasm. The polypeptide is Protein SprT (Shigella flexneri serotype 5b (strain 8401)).